The primary structure comprises 298 residues: Lipoyl synthase (298 aa).

Positions 40, 45, 51, 67, 71, 74, and 280 each coordinate [4Fe-4S] cluster. One can recognise a Radical SAM core domain in the interval 53 to 269; it reads AVRKTATFMI…KEIALSKGFS (217 aa).

Belongs to the radical SAM superfamily. Lipoyl synthase family. It depends on [4Fe-4S] cluster as a cofactor.

The protein localises to the cytoplasm. It carries out the reaction [[Fe-S] cluster scaffold protein carrying a second [4Fe-4S](2+) cluster] + N(6)-octanoyl-L-lysyl-[protein] + 2 oxidized [2Fe-2S]-[ferredoxin] + 2 S-adenosyl-L-methionine + 4 H(+) = [[Fe-S] cluster scaffold protein] + N(6)-[(R)-dihydrolipoyl]-L-lysyl-[protein] + 4 Fe(3+) + 2 hydrogen sulfide + 2 5'-deoxyadenosine + 2 L-methionine + 2 reduced [2Fe-2S]-[ferredoxin]. It participates in protein modification; protein lipoylation via endogenous pathway; protein N(6)-(lipoyl)lysine from octanoyl-[acyl-carrier-protein]. Catalyzes the radical-mediated insertion of two sulfur atoms into the C-6 and C-8 positions of the octanoyl moiety bound to the lipoyl domains of lipoate-dependent enzymes, thereby converting the octanoylated domains into lipoylated derivatives. The protein is Lipoyl synthase of Bacillus mycoides (strain KBAB4) (Bacillus weihenstephanensis).